The sequence spans 523 residues: Flavin-dependent halogenase armH5 (523 aa).

Positions 17, 20, and 50 each coordinate FAD. Chloride is bound by residues Ser328 and Gly329. Residue Val330 participates in FAD binding.

This sequence belongs to the flavin-dependent halogenase family.

It catalyses the reaction melleolide F + FADH2 + chloride + O2 = 6'-chloromelleolide F + FAD + 2 H2O + H(+). Flavin-dependent halogenase involved in the biosynthesis of melleolides, a range of antifungal and phytotoxic polyketide derivatives composed of an orsellinic acid (OA) moiety esterified to various sesquiterpene alcohols. The halogenase catalyzes the transfer of a single chlorine atom to the melleolide backbone, resulting in a 6'-chloromelleolide product. The enzyme acts on free substrate and does not depend on carrier-protein-dependent acceptor molecules. The polypeptide is Flavin-dependent halogenase armH5 (Armillaria mellea (Honey mushroom)).